Reading from the N-terminus, the 376-residue chain is MRITVSAIKADVGGIGGHTLPSSGLLDAVRRKVSSSSLLIDHYIGYCGDDVHIVMTHTRGTDNSDIHKLAWDAFMEGTRVAKEEGLYGAGQDLLRDSFSGNVKGMGPGVAELEFEERANEAFTVFAADKTEPGAFNYPFYRMFVDSLSNTGLIVNKSLAEGVVINIMDVSKARTARLVLWEDKPTIEAALMYPGRFVVSSVETRDGEPIASASTDRLHNIAGTYVGKDDPICLVRTQKRFPATEEAGSCFNNPHYVAGNTRGSHHMPLMPVRLNSPASINFCIPIVEALVFSMHEGRLTGPFDGFSTPDWDDVRRTATRRAHAMRRQGFVHPATLVPDELEYAEGYRSRMDVLDSKMVPLKDSGPAGTGRAYEDPD.

Asp11 acts as the Proton acceptor; for FBP phosphatase activity in catalysis. Mg(2+) is bound by residues Asp11, His18, Asp49, and Asp50. Beta-D-fructose 1,6-bisphosphate is bound at residue His18. His18 provides a ligand contact to dihydroxyacetone phosphate. Tyr87 contacts beta-D-fructose 1,6-bisphosphate. Mg(2+) is bound at residue Gln91. 100–101 (GN) contacts beta-D-fructose 1,6-bisphosphate. Asp128 is a binding site for Mg(2+). Residue Lys129 coordinates beta-D-fructose 1,6-bisphosphate. Lys129 contacts dihydroxyacetone phosphate. Catalysis depends on Tyr224, which acts as the Proton donor/acceptor; for FBP aldolase activity. Residues Lys227, Asp228, and Asp229 each contribute to the Mg(2+) site. Lys227 (schiff-base intermediate with DHAP; for FBP aldolase activity) is an active-site residue. Residues 237–238 (QK), Arg261, and Tyr342 each bind beta-D-fructose 1,6-bisphosphate. Arg261 lines the dihydroxyacetone phosphate pocket. The interval 357 to 376 (MVPLKDSGPAGTGRAYEDPD) is disordered.

The protein belongs to the FBP aldolase/phosphatase family. As to quaternary structure, homooctamer; dimer of tetramers. It depends on Mg(2+) as a cofactor.

It carries out the reaction beta-D-fructose 1,6-bisphosphate + H2O = beta-D-fructose 6-phosphate + phosphate. The enzyme catalyses beta-D-fructose 1,6-bisphosphate = D-glyceraldehyde 3-phosphate + dihydroxyacetone phosphate. It participates in carbohydrate biosynthesis; gluconeogenesis. In terms of biological role, catalyzes two subsequent steps in gluconeogenesis: the aldol condensation of dihydroxyacetone phosphate (DHAP) and glyceraldehyde-3-phosphate (GA3P) to fructose-1,6-bisphosphate (FBP), and the dephosphorylation of FBP to fructose-6-phosphate (F6P). The sequence is that of Fructose-1,6-bisphosphate aldolase/phosphatase from Cenarchaeum symbiosum (strain A).